An 800-amino-acid chain; its full sequence is Cation/H(+) antiporter 9 (800 aa).

12 consecutive transmembrane segments (helical) span residues 43–63 (VIFG…FVCI), 73–93 (IGIP…PQLL), 110–130 (NVAL…LMGV), 145–165 (IVIA…FRNF), 186–206 (VIVS…VYEL), 216–236 (IAIS…VCIS), 247–267 (GIAN…LFIF), 287–306 (VYLY…LSVF), 338–358 (LVTN…ADVV), 371–391 (ILLL…PCLI), 401–421 (VIIA…FDVA), and 430–450 (ATYT…PTII).

Belongs to the monovalent cation:proton antiporter 2 (CPA2) transporter (TC 2.A.37) family. CHX (TC 2.A.37.4) subfamily.

The protein localises to the membrane. Its function is as follows. May operate as a cation/H(+) antiporter. This chain is Cation/H(+) antiporter 9 (CHX9), found in Arabidopsis thaliana (Mouse-ear cress).